A 356-amino-acid polypeptide reads, in one-letter code: Heparan sulfate 2-O-sulfotransferase 1 (356 aa).

The Cytoplasmic portion of the chain corresponds to 1–11 (MGLLRIMMPPK). A helical; Signal-anchor for type II membrane protein transmembrane segment spans residues 12 to 28 (LQLLAVLTFGVLMLFLE). Residues 24–51 (MLFLENQIQNLEESREKLERAIARHEVR) adopt a coiled-coil conformation. Residues 29 to 356 (NQIQNLEESR…FYEKIYPKSN (328 aa)) lie on the Lumenal side of the membrane. Residues Lys-83, Thr-84, Ala-85, Ser-86, Thr-87, and Ser-88 each coordinate adenosine 3',5'-bisphosphate. Asn-108 and Asn-127 each carry an N-linked (GlcNAc...) asparagine glycan. Catalysis depends on residues His-140 and His-142. Adenosine 3',5'-bisphosphate contacts are provided by Arg-164 and Ser-172. 2 disulfide bridges follow: Cys-201–Cys-209 and Cys-222–Cys-228. Adenosine 3',5'-bisphosphate is bound by residues Tyr-279, Ser-285, Thr-290, and Lys-293.

The protein belongs to the sulfotransferase 3 family. Homotrimer.

It localises to the golgi apparatus membrane. Catalyzes the transfer of a sulfo group from 3'-phospho-5'-adenylyl sulfate (PAPS) to the 2-OH position of iduronic acid (IdoA) or glucuronic acid (GlcA) within the heparan sulfate (HS) chain and participates in HS biosynthesis. This chain is Heparan sulfate 2-O-sulfotransferase 1, found in Xenopus laevis (African clawed frog).